Here is a 686-residue protein sequence, read N- to C-terminus: tRNA wybutosine-synthesizing protein 4 (686 aa).

The interval 1–22 (MGPRSRQRRTGTVQSTNDSSSL) is disordered. Polar residues predominate over residues 10-22 (TGTVQSTNDSSSL). Residues Arg-59, Gly-89, Asp-114, 161–162 (DL), and Glu-188 each bind S-adenosyl-L-methionine.

The protein belongs to the methyltransferase superfamily. LCMT family. As to quaternary structure, interacts with RNF144B/IBRDC2.

It catalyses the reaction 7-[(3S)-3-amino-3-carboxypropyl]wyosine(37) in tRNA(Phe) + S-adenosyl-L-methionine = 7-[(3S)-(3-amino-3-methoxycarbonyl)propyl]wyosine(37) in tRNA(Phe) + S-adenosyl-L-homocysteine. The catalysed reaction is 7-[(3S)-(3-amino-3-methoxycarbonyl)propyl]wyosine(37) in tRNA(Phe) + S-adenosyl-L-methionine + CO2 = wybutosine(37) in tRNA(Phe) + S-adenosyl-L-homocysteine + 2 H(+). It participates in tRNA modification; wybutosine-tRNA(Phe) biosynthesis. Its function is as follows. Probable S-adenosyl-L-methionine-dependent methyltransferase that acts as a component of the wybutosine biosynthesis pathway. Wybutosine is a hyper modified guanosine with a tricyclic base found at the 3'-position adjacent to the anticodon of eukaryotic phenylalanine tRNA. May methylate the carboxyl group of leucine residues to form alpha-leucine ester residues. This is tRNA wybutosine-synthesizing protein 4 (Lcmt2) from Rattus norvegicus (Rat).